The sequence spans 262 residues: Shikimate dehydrogenase (NADP(+)) (262 aa).

Shikimate-binding positions include 15–17 (SRS) and threonine 62. Catalysis depends on lysine 66, which acts as the Proton acceptor. Position 78 (glutamate 78) interacts with NADP(+). Shikimate contacts are provided by asparagine 87 and aspartate 102. Residues 126-130 (GAGGA), 150-155 (NRTLAR), and methionine 214 contribute to the NADP(+) site. Tyrosine 216 contacts shikimate. Glycine 236 serves as a coordination point for NADP(+).

This sequence belongs to the shikimate dehydrogenase family. As to quaternary structure, homodimer.

The enzyme catalyses shikimate + NADP(+) = 3-dehydroshikimate + NADPH + H(+). Its pathway is metabolic intermediate biosynthesis; chorismate biosynthesis; chorismate from D-erythrose 4-phosphate and phosphoenolpyruvate: step 4/7. Functionally, involved in the biosynthesis of the chorismate, which leads to the biosynthesis of aromatic amino acids. Catalyzes the reversible NADPH linked reduction of 3-dehydroshikimate (DHSA) to yield shikimate (SA). In Acinetobacter baumannii (strain SDF), this protein is Shikimate dehydrogenase (NADP(+)).